A 129-amino-acid polypeptide reads, in one-letter code: Replication initiation control protein YabA (129 aa).

The disordered stretch occupies residues 52–71 (LSLTDEATPEPKAETEAEHG). Residues 60-71 (PEPKAETEAEHG) show a composition bias toward basic and acidic residues. Zn(2+)-binding residues include His-103, Cys-105, Cys-119, and Cys-122.

The protein belongs to the YabA family. In terms of assembly, homotetramer. Interacts with both DnaA and DnaN, acting as a bridge between these two proteins. It depends on Zn(2+) as a cofactor.

Its subcellular location is the cytoplasm. The protein localises to the nucleoid. Involved in control of chromosome replication initiation. Inhibits the cooperative binding of DnaA to the oriC region, thus negatively regulating initiation of chromosome replication. Inhibits the ability of DnaA-ATP to form a helix on DNA; does not disassemble preformed DnaA-DNA helices. Decreases the residence time of DnaA on the chromosome at its binding sites (oriC, replication forks and promoter-binding sites). Tethers DnaA to the replication machinery via the DNA polymerase beta sliding clamp subunit (dnaN). Associates with oriC and other DnaA targets on the chromosome in a DnaA-dependent manner. This chain is Replication initiation control protein YabA, found in Listeria monocytogenes serotype 4a (strain HCC23).